The sequence spans 491 residues: Aspartyl/glutamyl-tRNA(Asn/Gln) amidotransferase subunit B (491 aa).

This sequence belongs to the GatB/GatE family. GatB subfamily. In terms of assembly, heterotrimer of A, B and C subunits.

It carries out the reaction L-glutamyl-tRNA(Gln) + L-glutamine + ATP + H2O = L-glutaminyl-tRNA(Gln) + L-glutamate + ADP + phosphate + H(+). The enzyme catalyses L-aspartyl-tRNA(Asn) + L-glutamine + ATP + H2O = L-asparaginyl-tRNA(Asn) + L-glutamate + ADP + phosphate + 2 H(+). In terms of biological role, allows the formation of correctly charged Asn-tRNA(Asn) or Gln-tRNA(Gln) through the transamidation of misacylated Asp-tRNA(Asn) or Glu-tRNA(Gln) in organisms which lack either or both of asparaginyl-tRNA or glutaminyl-tRNA synthetases. The reaction takes place in the presence of glutamine and ATP through an activated phospho-Asp-tRNA(Asn) or phospho-Glu-tRNA(Gln). The polypeptide is Aspartyl/glutamyl-tRNA(Asn/Gln) amidotransferase subunit B (Prochlorococcus marinus (strain NATL2A)).